The primary structure comprises 428 residues: tRNA modification GTPase MnmE (428 aa).

Positions 20, 77, and 117 each coordinate (6S)-5-formyl-5,6,7,8-tetrahydrofolate. The region spanning 213–351 (GFEVAIVGSP…LVSRISDTLR (139 aa)) is the TrmE-type G domain. GTP is bound by residues 223–228 (NVGKST), 242–248 (SEYAGTT), and 267–270 (DTAG). Ser227 and Thr248 together coordinate Mg(2+). (6S)-5-formyl-5,6,7,8-tetrahydrofolate is bound at residue Lys428.

This sequence belongs to the TRAFAC class TrmE-Era-EngA-EngB-Septin-like GTPase superfamily. TrmE GTPase family. Homodimer. Heterotetramer of two MnmE and two MnmG subunits. The cofactor is K(+).

It is found in the cytoplasm. Its function is as follows. Exhibits a very high intrinsic GTPase hydrolysis rate. Involved in the addition of a carboxymethylaminomethyl (cmnm) group at the wobble position (U34) of certain tRNAs, forming tRNA-cmnm(5)s(2)U34. The chain is tRNA modification GTPase MnmE from Ruegeria sp. (strain TM1040) (Silicibacter sp.).